The primary structure comprises 530 residues: Asc-type amino acid transporter 1 (530 aa).

A disordered region spans residues 1 to 36 (MRRDSDMASHIQQPGGHGNPGPAPSPSPGPGPGPGA). Over residues 21-33 (GPAPSPSPGPGPG) the composition is skewed to pro residues. The next 10 helical transmembrane spans lie at 46–66 (IGLV…GIFI), 78–98 (VGLA…GSLC), 119–139 (IFGG…MYPT), 192–212 (IQVI…TVGF), 274–294 (AIFI…VAYF), 316–336 (LLGY…FGGI), 368–388 (CTPI…MLVG), 394–414 (INYV…GLLV), 430–450 (LLVP…SFIS), and 454–474 (VCGV…LGVF). Residues 508–530 (EEENGPMGQPSPLPITDKPLKTQ) are disordered.

Belongs to the amino acid-polyamine-organocation (APC) superfamily. As to quaternary structure, disulfide-linked heterodimer with the amino acid transport protein SLC3A2/4F2hc.

It localises to the cell membrane. It carries out the reaction L-alanine(in) + glycine(out) = L-alanine(out) + glycine(in). The catalysed reaction is L-serine(out) + L-alanine(in) = L-serine(in) + L-alanine(out). The enzyme catalyses L-threonine(out) + L-alanine(in) = L-threonine(in) + L-alanine(out). It catalyses the reaction L-cysteine(out) + L-alanine(in) = L-cysteine(in) + L-alanine(out). It carries out the reaction 2-aminoisobutanoate(out) + L-alanine(in) = 2-aminoisobutanoate(in) + L-alanine(out). The catalysed reaction is D-serine(out) + L-alanine(in) = D-serine(in) + L-alanine(out). The enzyme catalyses D-alanine(out) + L-alanine(in) = D-alanine(in) + L-alanine(out). It catalyses the reaction L-valine(out) + L-alanine(in) = L-valine(in) + L-alanine(out). It carries out the reaction L-methionine(out) + L-alanine(in) = L-methionine(in) + L-alanine(out). The catalysed reaction is beta-alanine(out) + L-alanine(in) = beta-alanine(in) + L-alanine(out). The enzyme catalyses D-cysteine(out) + L-alanine(in) = D-cysteine(in) + L-alanine(out). It catalyses the reaction D-threonine(out) + L-alanine(in) = D-threonine(in) + L-alanine(out). It carries out the reaction D-isoleucine(out) + D-serine(in) = D-isoleucine(in) + D-serine(out). The catalysed reaction is D-serine(in) = D-serine(out). Its function is as follows. Associates with SLC3A2/4F2hc to form a functional heterodimeric complex that translocates small neutral L- and D-amino acids across the plasma membrane. Preferentially mediates exchange transport, but can also operate via facilitated diffusion. Acts as a major transporter for glycine, L- and D-serine in the central nervous system. At the spinal cord and brainstem regulates glycine metabolism and glycinergic inhibitory neurotransmission by providing for glycine de novo synthesis from L-serine and glycine recycling from astrocytes to glycinergic motor neurons. At Schaffer collateral-CA1 synapses mediates D-serine and glycine release that modulates post-synaptic activation of NMDA receptors and excitatory glutamatergic transmission. May regulate D-serine release from mesenchymal progenitors located in developing subcutaneous adipose tissue, favoring white adipocyte over thermogenic beige adipocyte lineage commitment. The chain is Asc-type amino acid transporter 1 (Slc7a10) from Rattus norvegicus (Rat).